Consider the following 84-residue polypeptide: Conotoxin Am6.1 (84 aa).

A signal peptide spans 1 to 19 (MEKLTILLLVAAVLMSTHA). A propeptide spanning residues 20-47 (MFQGGGEKSRKAINFSETRKLARNKQKR) is cleaved from the precursor. Cystine bridges form between Cys48–Cys62, Cys55–Cys66, and Cys61–Cys71. Trp51 carries the post-translational modification 6'-bromotryptophan; in Am6.1b. Glu60 and Glu64 each carry 4-carboxyglutamate; partial; in Am6.1b and Am6.1c. Positions 78–84 (RTTSHPI) are excised as a propeptide.

It belongs to the conotoxin O2 family. In terms of processing, three forms of this peptides have been described. The unmodified Am6.1a (Am3286) is not detected in the venom; Am6.1b (Am3408) is only Trp brominated, while Am6.1c (Am3452) is both Trp brominated and Glu gamma-carboxyglutamated. Both Am6.1b and Am6.1c are detected in the venom. In terms of tissue distribution, expressed by the venom duct.

Its subcellular location is the secreted. Its function is as follows. Gamma-conotoxins may act on voltage-gated non-specific cation pacemaker channels (HCN). In Conus amadis (Amadis cone), this protein is Conotoxin Am6.1.